The sequence spans 282 residues: Undecaprenyl-diphosphatase (282 aa).

7 helical membrane-spanning segments follow: residues 1–21 (MTLF…FLPV), 40–60 (GAAF…IYFY), 85–105 (AAMG…GLLF), 117–137 (YWVS…EWSV), 196–216 (FSFL…LYHT), 229–249 (AITA…AFLI), and 258–278 (SIFI…IAAG).

This sequence belongs to the UppP family.

It localises to the cell inner membrane. It catalyses the reaction di-trans,octa-cis-undecaprenyl diphosphate + H2O = di-trans,octa-cis-undecaprenyl phosphate + phosphate + H(+). Functionally, catalyzes the dephosphorylation of undecaprenyl diphosphate (UPP). Confers resistance to bacitracin. This Chlorobium phaeobacteroides (strain DSM 266 / SMG 266 / 2430) protein is Undecaprenyl-diphosphatase.